We begin with the raw amino-acid sequence, 1658 residues long: Silent chromatin protein ESC1 (1658 aa).

Positions 36–54 are enriched in basic and acidic residues; sequence DSKMKDQHGYSRVHNDKYR. Disordered stretches follow at residues 36-76 and 156-499; these read DSKM…SSHI and TSFQ…LENE. 2 stretches are compositionally biased toward acidic residues: residues 205 to 214 and 245 to 254; these read LENDEYELSE and SNDEYAEEEG. The span at 262–286 shows a compositional bias: polar residues; it reads GQEQANVENATQISSSDSSEGQNYS. Residues 289 to 305 show a composition bias toward acidic residues; it reads VEMELEDDIDVESDAEK. Residues 335–352 show a composition bias toward basic and acidic residues; the sequence is VIEKYESDEHKVHQRYSE. The span at 365 to 375 shows a compositional bias: acidic residues; it reads VDDESEDEESQ. The span at 386 to 397 shows a compositional bias: basic and acidic residues; sequence VYHHNEHELDDK. The segment covering 398–407 has biased composition (acidic residues); sequence ELIEDIESSD. The segment covering 408 to 417 has biased composition (low complexity); that stretch reads SESQSAQESE. Composition is skewed to basic and acidic residues over residues 425–435, 442–461, and 471–482; these read EYKMKNEKSTS, SESRDQGFAKDAYTKNKVEQ, and DDIIRSSLDKNF. Thr500 carries the phosphothreonine modification. Residue Ser532 is modified to Phosphoserine. 2 disordered regions span residues 550-584 and 589-608; these read SRNSNCPQKEEQVSESYLGHSNGSNLSGRSLDESE and LKDFTGENNNNLKTDRGDLS. Over residues 568–577 the composition is skewed to polar residues; sequence GHSNGSNLSG. Residues Ser579, Ser583, Ser608, and Ser662 each carry the phosphoserine modification. Disordered stretches follow at residues 770–819, 863–964, and 1082–1115; these read SKET…EDNT, EMSS…VKGT, and ENNTNMHDQVSQACSDSDRDQDSTAEKNVEGSAK. A compositionally biased stretch (polar residues) spans 800-812; that stretch reads QSKNFPGVANSTD. 2 positions are modified to phosphoserine: Ser865 and Ser866. Basic and acidic residues predominate over residues 869–878; the sequence is ECVKQNDDGS. Residues 879–905 are compositionally biased toward polar residues; the sequence is KTQISFSTDSPDNFQESNDNTEFSSTK. Ser888 and Ser911 each carry phosphoserine. Basic and acidic residues predominate over residues 918 to 931; sequence SLKKELTKAEVVDK. Over residues 932–956 the composition is skewed to acidic residues; sequence LDEEESEDSYEQDYADPEPGNDEGS. Ser937, Ser1092, Ser1096, Ser1098, Ser1166, Ser1176, and Ser1178 each carry phosphoserine. Residues 1082 to 1096 show a composition bias toward polar residues; it reads ENNTNMHDQVSQACS. The segment covering 1097–1115 has biased composition (basic and acidic residues); it reads DSDRDQDSTAEKNVEGSAK. Polar residues predominate over residues 1197-1207; that stretch reads STDASVNMKSV. The interval 1197–1216 is disordered; sequence STDASVNMKSVSSKERDSDE. Phosphoserine occurs at positions 1214 and 1254. Positions 1261–1272 are enriched in basic and acidic residues; that stretch reads VKDKENLHKSEE. The segment at 1261–1315 is disordered; that stretch reads VKDKENLHKSEEPLVEGLQSEQHFEKKDHSENEEEFDTIYGDITSANIHSNAPDD. Phosphoserine is present on residues Ser1290, Ser1326, and Ser1332. Disordered regions lie at residues 1334–1482 and 1503–1658; these read RLIE…TSPE and PATT…SVDK. Residues 1335–1366 are compositionally biased toward basic and acidic residues; sequence LIEDSRRGKNQEESDEVNTSRERDLTFEKSVN. A phosphoserine mark is found at Ser1403, Ser1409, Ser1450, and Ser1454. Over residues 1407–1423 the composition is skewed to acidic residues; that stretch reads LNSEPEEAELYELEIEG. A compositionally biased stretch (polar residues) spans 1463 to 1479; the sequence is YPYSNSENITAEKSAPT. Over residues 1507 to 1537 the composition is skewed to basic and acidic residues; it reads LEKHDKTNVTSVLDDRSEHLSSHDVDNEPHD. Ser1539 bears the Phosphoserine mark. 2 stretches are compositionally biased toward basic and acidic residues: residues 1550–1564 and 1575–1591; these read PEHQAVDIPVKVEVK and VLEEQKPSMELINDKSS. Phosphoserine occurs at positions 1590 and 1591. Residues 1607-1626 are compositionally biased toward basic residues; the sequence is TKAKKKSRKRNYNSRRRKRK. A compositionally biased stretch (polar residues) spans 1648-1658; the sequence is RGQNTHPSVDK.

In terms of assembly, interacts with SIR4.

It is found in the nucleus. In terms of biological role, involved in the clustering of telomeres at the nuclear periphery, forming discrete subcompartments that accumulate a complex of histone-binding silencing factors like SIR4. Required for SIR4-mediated anchoring and partitioning of plasmids. The polypeptide is Silent chromatin protein ESC1 (ESC1) (Saccharomyces cerevisiae (strain ATCC 204508 / S288c) (Baker's yeast)).